The sequence spans 244 residues: DNA repair protein RecO (244 aa).

It belongs to the RecO family.

In terms of biological role, involved in DNA repair and RecF pathway recombination. This chain is DNA repair protein RecO, found in Nocardioides sp. (strain ATCC BAA-499 / JS614).